A 427-amino-acid chain; its full sequence is Septin-6 (427 aa).

Residue A2 is modified to N-acetylalanine. S27 is modified (phosphoserine). Positions 39–305 constitute a Septin-type G domain; it reads QGFCFNILCV…ELYRRCKLEE (267 aa). Positions 49 to 56 are G1 motif; the sequence is GETGLGKS. GTP-binding positions include 49-56, G104, 185-193, G239, and R254; these read GETGLGKS and KSDAISKSE. Positions 101 to 104 are G3 motif; it reads STVG. The tract at residues 184 to 187 is G4 motif; that stretch reads AKSD. Positions 321-416 form a coiled coil; it reads QETYEAKRNE…QSQGSQAGGS (96 aa). K367 is subject to N6-acetyllysine. The segment at 405-427 is disordered; sequence LLQSQGSQAGGSQTLKRDKEKKN. Over residues 407–417 the composition is skewed to low complexity; it reads QSQGSQAGGSQ. At S416 the chain carries Phosphoserine. T418 carries the post-translational modification Phosphothreonine.

Belongs to the TRAFAC class TrmE-Era-EngA-EngB-Septin-like GTPase superfamily. Septin GTPase family. As to quaternary structure, septins polymerize into heterooligomeric protein complexes that form filaments, and associate with cellular membranes, actin filaments and microtubules. GTPase activity is required for filament formation. Filaments are assembled from asymmetrical heterotrimers, composed of SEPTIN2, SEPTIN6 and SEPTIN7 that associate head-to-head to form a hexameric unit. Within the trimer, directly interacts with SEPTIN2 and SEPTIN7. Also interacts with SEPTIN9 and SEPTIN12. Interaction with SEPTIN12 alters filament structure. Component of a septin core octameric complex consisting of SEPTIN12, SEPTIN7, SEPTIN6 and SEPTIN2 or SEPTIN4 in the order 12-7-6-2-2-6-7-12 or 12-7-6-4-4-6-7-12 and located in the sperm annulus. Interacts with SOCS7. Interacts with HNRNPA1.

The protein resides in the cytoplasm. Its subcellular location is the cytoskeleton. The protein localises to the spindle. It is found in the chromosome. It localises to the centromere. The protein resides in the kinetochore. Its subcellular location is the cleavage furrow. The protein localises to the midbody. It is found in the cell projection. It localises to the cilium. The protein resides in the flagellum. Filament-forming cytoskeletal GTPase. Required for normal organization of the actin cytoskeleton. Involved in cytokinesis. Forms a filamentous structure with SEPTIN12, SEPTIN6, SEPTIN2 and probably SEPTIN4 at the sperm annulus which is required for the structural integrity and motility of the sperm tail during postmeiotic differentiation. This Bos taurus (Bovine) protein is Septin-6.